The sequence spans 271 residues: Shikimate dehydrogenase (NADP(+)) (271 aa).

Shikimate is bound by residues 14–16 and Thr61; that span reads SLS. The active-site Proton acceptor is Lys65. Positions 86 and 101 each coordinate shikimate. NADP(+) contacts are provided by residues 125–129 and Ile212; that span reads GAGGA. Tyr214 contributes to the shikimate binding site. Residue Gly235 coordinates NADP(+).

The protein belongs to the shikimate dehydrogenase family. Homodimer.

It catalyses the reaction shikimate + NADP(+) = 3-dehydroshikimate + NADPH + H(+). The protein operates within metabolic intermediate biosynthesis; chorismate biosynthesis; chorismate from D-erythrose 4-phosphate and phosphoenolpyruvate: step 4/7. In terms of biological role, involved in the biosynthesis of the chorismate, which leads to the biosynthesis of aromatic amino acids. Catalyzes the reversible NADPH linked reduction of 3-dehydroshikimate (DHSA) to yield shikimate (SA). The protein is Shikimate dehydrogenase (NADP(+)) of Clostridium perfringens (strain ATCC 13124 / DSM 756 / JCM 1290 / NCIMB 6125 / NCTC 8237 / Type A).